The primary structure comprises 455 residues: Mu-like prophage FluMu DNA circularization protein (455 aa).

The segment at residues 368 to 387 (VILDNADAEQWTSYAALEQY) is a DNA-binding region (H-T-H motif).

To phage Mu protein N.

The chain is Mu-like prophage FluMu DNA circularization protein from Haemophilus influenzae (strain ATCC 51907 / DSM 11121 / KW20 / Rd).